Consider the following 144-residue polypeptide: uncharacterized protein (144 aa).

This is an uncharacterized protein from Bacillus subtilis (strain 168).